The chain runs to 287 residues: MTMMDMNFKYCHKIMKKHSKSFSYAFDLLPEDQRKAVWAIYAVCRKIDDSIDVYGDIQFLNQIKEDIQSIEKYPYEHHHFQSDRRIMMALQHVAQHKNIAFQSFYNLIDTVYKDQHFTMFETDAELFGYCYGVAGTVGEVLTPILSDHETHQTYDVARRLGESLQLINILRDVGEDFDNERVYFSKQRLKQYEVDIAEVYQNGVNNHYIDLWEYYAAIAEKDFQDVMDQIKVFSIEAQPIIELAARIYIEILDEVRQANYTLHERVFVDKRKKAKLFHEINSKYHRI.

(2E,6E)-farnesyl diphosphate-binding positions include 18–21 (HSKS), tyrosine 41, and arginine 45. Residues aspartate 48 and aspartate 52 each contribute to the Mg(2+) site. Glutamine 165 contacts (2E,6E)-farnesyl diphosphate. Asparagine 168 provides a ligand contact to Mg(2+). A (2E,6E)-farnesyl diphosphate-binding site is contributed by arginine 171. Aspartate 172 is a Mg(2+) binding site. Tyrosine 248 contacts (2E,6E)-farnesyl diphosphate.

The protein belongs to the phytoene/squalene synthase family. CrtM subfamily. Mg(2+) is required as a cofactor.

It catalyses the reaction 2 (2E,6E)-farnesyl diphosphate = 15-cis-4,4'-diapophytoene + 2 diphosphate. It functions in the pathway carotenoid biosynthesis; staphyloxanthin biosynthesis; staphyloxanthin from farnesyl diphosphate: step 1/5. Its function is as follows. Involved in the biosynthesis of the yellow-orange carotenoid staphyloxanthin, which plays a role in the virulence via its protective function against oxidative stress. Catalyzes the head-to-head condensation of two molecules of farnesyl diphosphate (FPP) into the colorless C(30) carotenoid 4,4'-diapophytoene (dehydrosqualene). This is 4,4'-diapophytoene synthase (crtM) from Staphylococcus aureus (strain Mu50 / ATCC 700699).